We begin with the raw amino-acid sequence, 185 residues long: MIDEILRDAEQRMKKSIELLRQELAGIRAGRAAPSLLEHLEVNYYGTPTPLNQLATISAPEARLLVVQVWDRNAVSAVEKAIRQSELGLNPSVDGQTLRIQLPPLTEERRRQLVKLVHEEVEETKVAIRNIRRDALADIKELLKNKEISEDDERRAEQRLQDLTNRYIAEADKLGKQKEHDILEI.

It belongs to the RRF family.

The protein localises to the cytoplasm. Functionally, responsible for the release of ribosomes from messenger RNA at the termination of protein biosynthesis. May increase the efficiency of translation by recycling ribosomes from one round of translation to another. This Thermomicrobium roseum (strain ATCC 27502 / DSM 5159 / P-2) protein is Ribosome-recycling factor.